The following is a 168-amino-acid chain: Disulfide bond formation protein B 1 (168 aa).

Residues 1–14 (MNEQTSRLNRERRF) are Cytoplasmic-facing. The helical transmembrane segment at 15–31 (LVLLGLICLSLIGGALY) threads the bilayer. Residues 32 to 49 (MQVVLGEAPCPLCILQRY) are Periplasmic-facing. An intrachain disulfide couples C41 to C44. A helical membrane pass occupies residues 50–65 (ALLFIAVFAFIAAAMP). Residues 66-72 (GRRSLTF) lie on the Cytoplasmic side of the membrane. A helical transmembrane segment spans residues 73–89 (FEALVVLSAIGGIVAAG). At 90-144 (NHVYILANPMVSCGIDTLQPIVDDLPLAKLWPLAFQVDGFCSTPYPPILGLSLAQ) the chain is on the periplasmic side. Cysteines 102 and 130 form a disulfide. A helical transmembrane segment spans residues 145–163 (WALVAFVLTAVLVPLGIYR). At 164 to 168 (NRRQA) the chain is on the cytoplasmic side.

This sequence belongs to the DsbB family.

The protein resides in the cell inner membrane. Required for disulfide bond formation in some periplasmic proteins. Acts by oxidizing the DsbA protein. The polypeptide is Disulfide bond formation protein B 1 (dsbB1) (Pseudomonas putida (strain ATCC 47054 / DSM 6125 / CFBP 8728 / NCIMB 11950 / KT2440)).